We begin with the raw amino-acid sequence, 330 residues long: Tryptophan--tRNA ligase (330 aa).

ATP-binding positions include 9-11 (QPT) and 17-18 (GN). The 'HIGH' region motif lies at 10–18 (PTGDPHIGN). Aspartate 136 is an L-tryptophan binding site. Residues 148–150 (GED), isoleucine 187, and 195–199 (KMSKS) contribute to the ATP site. A 'KMSKS' region motif is present at residues 195–199 (KMSKS).

It belongs to the class-I aminoacyl-tRNA synthetase family. In terms of assembly, homodimer.

It is found in the cytoplasm. It catalyses the reaction tRNA(Trp) + L-tryptophan + ATP = L-tryptophyl-tRNA(Trp) + AMP + diphosphate + H(+). Its function is as follows. Catalyzes the attachment of tryptophan to tRNA(Trp). In Deinococcus radiodurans (strain ATCC 13939 / DSM 20539 / JCM 16871 / CCUG 27074 / LMG 4051 / NBRC 15346 / NCIMB 9279 / VKM B-1422 / R1), this protein is Tryptophan--tRNA ligase.